A 371-amino-acid polypeptide reads, in one-letter code: Geranylgeranyl transferase type-2 subunit alpha (371 aa).

PFTA repeat units follow at residues 45–79 (YSDE…NNYS), 92–126 (ILNQ…ELVK), 131–165 (NWKY…NMEL), 177–211 (INLD…KIYN), and 242–276 (LLKN…DDLF).

This sequence belongs to the protein prenyltransferase subunit alpha family. Heterodimer of an alpha and a beta subunit.

It catalyses the reaction geranylgeranyl diphosphate + L-cysteinyl-[protein] = S-geranylgeranyl-L-cysteinyl-[protein] + diphosphate. Functionally, catalyzes the transfer of a geranyl-geranyl moiety from geranyl-geranyl pyrophosphate to proteins having the C-terminal -XCC or -XCXC, where both cysteines may become modified. Acts on YPT1 and SEC4. In Candida albicans (Yeast), this protein is Geranylgeranyl transferase type-2 subunit alpha (BET4).